A 246-amino-acid chain; its full sequence is mRNA-decapping protein g5R (246 aa).

Residues 91-239 (KYQKFKKNWL…IIGPAFNFIK (149 aa)) enclose the Nudix hydrolase domain. A Nudix box motif is present at residues 128–149 (GKPKENESDLACAIREFEEETG). Position 134 (Glu134) interacts with Mg(2+). Glu143 (nucleophile) is an active-site residue. Mg(2+) is bound by residues Glu147 and Glu169.

Belongs to the Nudix hydrolase family. DIPP subfamily. In terms of assembly, interacts with host RPL23A. The cofactor is Mg(2+). Mn(2+) serves as cofactor.

The protein resides in the host rough endoplasmic reticulum. The catalysed reaction is diphospho-myo-inositol polyphosphate + H2O = myo-inositol polyphosphate + phosphate.. Functionally, decapping enzyme required for the removal of the 5'-end m7GpppN cap tethered to viral and host mRNAs to allow their decay in cells. May therefore accelerate viral and cellular mRNA turnover to eliminate competing host mRNAs and allow stage-specific synthesis of viral proteins. Acceleration of the turnover of cellular transcripts may even promote the shutoff of host protein synthesis. In addition to the mRNA cap, g5R also efficiently hydrolyzes diphosphoinositol polyphosphates. Down-regulation of the level of PP-InsP5 (diphosphoinositol pentakisphosphate) may play a role in viral manipulation of the cellular secretory pathway, a step necessary for the formation of virions. Binds viral and cellular poly(A) mRNAs, thereby decreasing both types of mRNAs. The polypeptide is mRNA-decapping protein g5R (African swine fever virus (isolate Pig/Kenya/KEN-50/1950) (ASFV)).